Consider the following 517-residue polypeptide: Crotonobetaine/carnitine--CoA ligase (517 aa).

It belongs to the ATP-dependent AMP-binding enzyme family.

The catalysed reaction is 4-(trimethylamino)butanoate + ATP + CoA = 4-(trimethylamino)butanoyl-CoA + AMP + diphosphate. It catalyses the reaction crotonobetaine + ATP + CoA = crotonobetainyl-CoA + AMP + diphosphate. It carries out the reaction (R)-carnitine + ATP + CoA = (R)-carnitinyl-CoA + AMP + diphosphate. It participates in amine and polyamine metabolism; carnitine metabolism. Functionally, catalyzes the transfer of CoA to carnitine, generating the initial carnitinyl-CoA needed for the CaiB reaction cycle. Also has activity toward crotonobetaine and gamma-butyrobetaine. This chain is Crotonobetaine/carnitine--CoA ligase, found in Escherichia coli (strain K12 / MC4100 / BW2952).